We begin with the raw amino-acid sequence, 240 residues long: tRNA (guanine-N(1)-)-methyltransferase (240 aa).

Residues Gly108 and 127-132 each bind S-adenosyl-L-methionine; that span reads IGDYVL.

This sequence belongs to the RNA methyltransferase TrmD family. Homodimer.

It is found in the cytoplasm. The catalysed reaction is guanosine(37) in tRNA + S-adenosyl-L-methionine = N(1)-methylguanosine(37) in tRNA + S-adenosyl-L-homocysteine + H(+). In terms of biological role, specifically methylates guanosine-37 in various tRNAs. This Lactobacillus johnsonii (strain CNCM I-12250 / La1 / NCC 533) protein is tRNA (guanine-N(1)-)-methyltransferase.